The sequence spans 191 residues: MSLISRLKAVVAGDEYLDDDFDELDYPSEDELNDINNFKQNPKNSNALANSNPFDFMNNNRSSKVVGMPGISNSSSEVSLMEPRSFDEMPQAIQALRERKTVILNLTMMDPDQAQRAVDFIAGGTYAIDGHQERVGESIFLFAPSCVNVTSSSPEEASPSSVSTENTPQYSLGKNTTPEPAWGNSKLSAYS.

Residues 150 to 164 (TSSSPEEASPSSVST) show a composition bias toward low complexity. Residues 150–191 (TSSSPEEASPSSVSTENTPQYSLGKNTTPEPAWGNSKLSAYS) form a disordered region. The segment covering 165-178 (ENTPQYSLGKNTTP) has biased composition (polar residues).

This sequence belongs to the SepF family. As to quaternary structure, homodimer. Interacts with FtsZ.

Its subcellular location is the cytoplasm. Its function is as follows. Cell division protein that is part of the divisome complex and is recruited early to the Z-ring. Probably stimulates Z-ring formation, perhaps through the cross-linking of FtsZ protofilaments. Its function overlaps with FtsA. The sequence is that of Cell division protein SepF from Prochlorococcus marinus (strain AS9601).